Here is a 405-residue protein sequence, read N- to C-terminus: Tyrosine-protein phosphatase non-receptor type eak-6 (405 aa).

The region spanning 30 to 309 (INQRINIIAD…SFIYDIIIKY (280 aa)) is the Tyrosine-protein phosphatase domain. C248 serves as the catalytic Phosphocysteine intermediate.

This sequence belongs to the protein-tyrosine phosphatase family. As to expression, expressed in the 2 embryonic head hypodermal cells XXXL/R.

It localises to the cytoplasm. The protein localises to the cell membrane. The enzyme catalyses O-phospho-L-tyrosyl-[protein] + H2O = L-tyrosyl-[protein] + phosphate. Putative phosphatase which, together with eak-4 and sdf-9, negatively regulates dauer larva formation downstream of insulin-like receptor daf-2 and in parallel of age-1, pdk-1 and akt-1. In Caenorhabditis elegans, this protein is Tyrosine-protein phosphatase non-receptor type eak-6.